The following is a 322-amino-acid chain: Phosphatidylserine decarboxylase proenzyme (322 aa).

Active-site charge relay system; for autoendoproteolytic cleavage activity residues include Asp-90, His-147, and Ser-254. Ser-254 functions as the Schiff-base intermediate with substrate; via pyruvic acid; for decarboxylase activity in the catalytic mechanism. Ser-254 is modified (pyruvic acid (Ser); by autocatalysis). The disordered stretch occupies residues 290–322 (FVTPDSEPAPLPAEEIEAEHDASPLVDDKKDQV). Basic and acidic residues predominate over residues 308 to 322 (EHDASPLVDDKKDQV).

It belongs to the phosphatidylserine decarboxylase family. PSD-B subfamily. Prokaryotic type I sub-subfamily. Heterodimer of a large membrane-associated beta subunit and a small pyruvoyl-containing alpha subunit. Pyruvate is required as a cofactor. In terms of processing, is synthesized initially as an inactive proenzyme. Formation of the active enzyme involves a self-maturation process in which the active site pyruvoyl group is generated from an internal serine residue via an autocatalytic post-translational modification. Two non-identical subunits are generated from the proenzyme in this reaction, and the pyruvate is formed at the N-terminus of the alpha chain, which is derived from the carboxyl end of the proenzyme. The autoendoproteolytic cleavage occurs by a canonical serine protease mechanism, in which the side chain hydroxyl group of the serine supplies its oxygen atom to form the C-terminus of the beta chain, while the remainder of the serine residue undergoes an oxidative deamination to produce ammonia and the pyruvoyl prosthetic group on the alpha chain. During this reaction, the Ser that is part of the protease active site of the proenzyme becomes the pyruvoyl prosthetic group, which constitutes an essential element of the active site of the mature decarboxylase.

It is found in the cell membrane. The enzyme catalyses a 1,2-diacyl-sn-glycero-3-phospho-L-serine + H(+) = a 1,2-diacyl-sn-glycero-3-phosphoethanolamine + CO2. It functions in the pathway phospholipid metabolism; phosphatidylethanolamine biosynthesis; phosphatidylethanolamine from CDP-diacylglycerol: step 2/2. Its function is as follows. Catalyzes the formation of phosphatidylethanolamine (PtdEtn) from phosphatidylserine (PtdSer). This Escherichia fergusonii (strain ATCC 35469 / DSM 13698 / CCUG 18766 / IAM 14443 / JCM 21226 / LMG 7866 / NBRC 102419 / NCTC 12128 / CDC 0568-73) protein is Phosphatidylserine decarboxylase proenzyme.